A 367-amino-acid polypeptide reads, in one-letter code: MLLTALAVLFASTGCQARLSVSGTNLNYNGHHIFLSGANQAWVNYARDFGHNQYSKGKSTFESTLSDIQSHGGNSVRVWLHIEGESTPEFDNNGYVTGIDNTLISDMRAYLHAAQRHNILIFFTLWNGAVKQSTHYRLNGLMVDTRKLQSYIDHALKPMANALKNEKALGGWDIMNEPEGEIKPGESSSEPCFDTRHLSGSGAGWAGHLYSAQEIGRFVNWQAAAIKEVDPGAMVTVGSWNMKADTDAMGFHNLYSDHCLVKAGGKQSGTLSFYQVHTYDWQNHFGNESPFKHSFSNFRLKKPMVIGEFNQEHGAGMSSESMFEWAYTKGYSGAWTWSRTDVSWNNQLRGIQHLKSRTDHGQVQFGL.

The signal sequence occupies residues 1-17 (MLLTALAVLFASTGCQA). Substrate contacts are provided by Trp79 and Asn176. Glu177 acts as the Proton donor in catalysis. Cys192 and Cys259 are oxidised to a cystine. Substrate is bound by residues Trp205, Trp240, and Tyr279. Glu308 serves as the catalytic Nucleophile. Residue Trp337 coordinates substrate.

In terms of assembly, monomer. Post-translationally, the disulfide bond between Cys-192 and Cys-259 has not been observed in X-ray crystallography. This may be a consequence of the X-ray radiation.

The catalysed reaction is Random hydrolysis of (1-&gt;4)-beta-D-mannosidic linkages in mannans, galactomannans and glucomannans.. Functionally, hydrolyzes 1,4-beta linked polysaccharide backbones of mannans. Hydrolyzes mannohexaose (M6) preferentially to mannotriose (M4) and less preferentially to mannotetraose (M3), mannopentaose (M5), and mannobiose (M2); hydrolyzes M5 preferentially to M2, and M3, and less preferentially to mannotetraose M4; hydrolyzes M4 preferentially to M3, and less preferentially to mannose (M1), plus very little M2. Does not hydrolyze mannobiose or mannotriose. Does not hydrolyze xlyan, starch, cellulose or galactose. This Mytilus edulis (Blue mussel) protein is Mannan endo-1,4-beta-mannosidase.